The primary structure comprises 284 residues: L-ribulose-5-phosphate 3-epimerase UlaE (284 aa).

The protein belongs to the L-ribulose-5-phosphate 3-epimerase family.

It carries out the reaction L-ribulose 5-phosphate = L-xylulose 5-phosphate. Its pathway is cofactor degradation; L-ascorbate degradation; D-xylulose 5-phosphate from L-ascorbate: step 3/4. Its function is as follows. Catalyzes the isomerization of L-xylulose-5-phosphate to L-ribulose-5-phosphate. Is involved in the anaerobic L-ascorbate utilization. This is L-ribulose-5-phosphate 3-epimerase UlaE from Escherichia coli O157:H7 (strain EC4115 / EHEC).